We begin with the raw amino-acid sequence, 285 residues long: Bifunctional protein FolD (285 aa).

Residues Gly166–Ser168, Ser191, and Thr232 each bind NADP(+).

It belongs to the tetrahydrofolate dehydrogenase/cyclohydrolase family. Homodimer.

It catalyses the reaction (6R)-5,10-methylene-5,6,7,8-tetrahydrofolate + NADP(+) = (6R)-5,10-methenyltetrahydrofolate + NADPH. The enzyme catalyses (6R)-5,10-methenyltetrahydrofolate + H2O = (6R)-10-formyltetrahydrofolate + H(+). The protein operates within one-carbon metabolism; tetrahydrofolate interconversion. Catalyzes the oxidation of 5,10-methylenetetrahydrofolate to 5,10-methenyltetrahydrofolate and then the hydrolysis of 5,10-methenyltetrahydrofolate to 10-formyltetrahydrofolate. This chain is Bifunctional protein FolD, found in Chloroflexus aurantiacus (strain ATCC 29366 / DSM 635 / J-10-fl).